The following is a 127-amino-acid chain: Protein chibby homolog 1 (127 aa).

A compositionally biased stretch (polar residues) spans 1-10; that stretch reads MPLFGSTFSP. Residues 1 to 26 form a disordered region; it reads MPLFGSTFSPKKTPPRKSASLSNLHN. Serine 9 and serine 20 each carry phosphoserine. Residues 60–112 are minimal region for the interaction with PKD2; sequence IAETGISGGVDRREAQRLRRRNQQLEEENNLLRLKVDILLDMLSETTAESHLM. The stretch at 68-125 forms a coiled coil; the sequence is GVDRREAQRLRRRNQQLEEENNLLRLKVDILLDMLSETTAESHLMEKELDELKSVSRR. The leucine-zipper; mediates homodimerization stretch occupies residues 77–98; that stretch reads LRRRNQQLEEENNLLRLKVDIL.

This sequence belongs to the chibby family. Homodimer. Homodimerization is essential for nuclear localization and interaction with KPNA4 but is dispensable for interaction with CTNNB1. Interacts with polycystin-2/PKD2 and GM130. Interacts with the C-terminal region of CTNNB1. Interacts (C-terminus) with TCIM (C-terminus), TCIM competes with CTNNB1 for the interaction with CBY1. Interacts with FAM92A; this interaction facilitates targeting of FAM92A to cilium basal body. Interacts with CIBAR2. Interacts with KPNA4.

The protein localises to the nucleus speckle. It localises to the cytoplasm. It is found in the cytoskeleton. The protein resides in the cilium basal body. Its subcellular location is the microtubule organizing center. The protein localises to the centrosome. It localises to the centriole. It is found in the golgi apparatus. The protein resides in the trans-Golgi network. Its subcellular location is the cell projection. The protein localises to the cilium. It localises to the flagellum. It is found in the nucleus. In terms of biological role, inhibits the Wnt/Wingless pathway by binding to CTNNB1/beta-catenin and inhibiting beta-catenin-mediated transcriptional activation through competition with TCF/LEF transcription factors. Has also been shown to play a role in regulating the intracellular trafficking of polycystin-2/PKD2 and possibly of other intracellular proteins. Promotes adipocyte and cardiomyocyte differentiation. The polypeptide is Protein chibby homolog 1 (CBY1) (Bos taurus (Bovine)).